Reading from the N-terminus, the 329-residue chain is Ribosomal RNA small subunit methyltransferase C (329 aa).

Belongs to the methyltransferase superfamily. RsmC family. As to quaternary structure, monomer.

The protein localises to the cytoplasm. It catalyses the reaction guanosine(1207) in 16S rRNA + S-adenosyl-L-methionine = N(2)-methylguanosine(1207) in 16S rRNA + S-adenosyl-L-homocysteine + H(+). Specifically methylates the guanine in position 1207 of 16S rRNA in the 30S particle. This Haemophilus ducreyi (strain 35000HP / ATCC 700724) protein is Ribosomal RNA small subunit methyltransferase C.